The chain runs to 316 residues: UDP-N-acetylenolpyruvoylglucosamine reductase (316 aa).

The 165-residue stretch at 30–194 (VGGEADYLVF…LSVKFALAPG (165 aa)) folds into the FAD-binding PCMH-type domain. R173 is a catalytic residue. The active-site Proton donor is S223. The active site involves E293.

The protein belongs to the MurB family. The cofactor is FAD.

Its subcellular location is the cytoplasm. It carries out the reaction UDP-N-acetyl-alpha-D-muramate + NADP(+) = UDP-N-acetyl-3-O-(1-carboxyvinyl)-alpha-D-glucosamine + NADPH + H(+). It functions in the pathway cell wall biogenesis; peptidoglycan biosynthesis. Its function is as follows. Cell wall formation. The protein is UDP-N-acetylenolpyruvoylglucosamine reductase of Streptococcus pneumoniae serotype 19F (strain G54).